Here is a 164-residue protein sequence, read N- to C-terminus: Putative 4-hydroxy-4-methyl-2-oxoglutarate aldolase (164 aa).

Substrate contacts are provided by residues 74–77 and Arg96; that span reads GGNL. Asp97 contacts a divalent metal cation.

The protein belongs to the class II aldolase/RraA-like family. As to quaternary structure, homotrimer. It depends on a divalent metal cation as a cofactor.

The catalysed reaction is 4-hydroxy-4-methyl-2-oxoglutarate = 2 pyruvate. It carries out the reaction oxaloacetate + H(+) = pyruvate + CO2. Catalyzes the aldol cleavage of 4-hydroxy-4-methyl-2-oxoglutarate (HMG) into 2 molecules of pyruvate. Also contains a secondary oxaloacetate (OAA) decarboxylase activity due to the common pyruvate enolate transition state formed following C-C bond cleavage in the retro-aldol and decarboxylation reactions. The chain is Putative 4-hydroxy-4-methyl-2-oxoglutarate aldolase from Thermus thermophilus (strain ATCC BAA-163 / DSM 7039 / HB27).